Consider the following 502-residue polypeptide: ATP synthase subunit alpha (502 aa).

Positions 115 to 138 (VDGLGPIETTETRPIESPAPGVMD) are disordered. ATP is bound at residue 169 to 176 (GDRQTGKT).

Belongs to the ATPase alpha/beta chains family. F-type ATPases have 2 components, CF(1) - the catalytic core - and CF(0) - the membrane proton channel. CF(1) has five subunits: alpha(3), beta(3), gamma(1), delta(1), epsilon(1). CF(0) has three main subunits: a(1), b(2) and c(9-12). The alpha and beta chains form an alternating ring which encloses part of the gamma chain. CF(1) is attached to CF(0) by a central stalk formed by the gamma and epsilon chains, while a peripheral stalk is formed by the delta and b chains.

The protein resides in the cell membrane. The catalysed reaction is ATP + H2O + 4 H(+)(in) = ADP + phosphate + 5 H(+)(out). Produces ATP from ADP in the presence of a proton gradient across the membrane. The alpha chain is a regulatory subunit. The protein is ATP synthase subunit alpha of Geobacillus sp. (strain WCH70).